A 230-amino-acid polypeptide reads, in one-letter code: Dephospho-CoA kinase (230 aa).

One can recognise a DPCK domain in the interval Leu-3–Arg-206. An ATP-binding site is contributed by Gly-8 to Ser-15.

The protein belongs to the CoaE family.

The enzyme catalyses 3'-dephospho-CoA + ATP = ADP + CoA + H(+). It participates in cofactor biosynthesis; coenzyme A biosynthesis; CoA from (R)-pantothenate: step 5/5. In terms of biological role, catalyzes the phosphorylation of the 3'-hydroxyl group of dephosphocoenzyme A to form coenzyme A. In Oryza sativa subsp. japonica (Rice), this protein is Dephospho-CoA kinase.